Consider the following 765-residue polypeptide: Putative U-box domain-containing protein 50 (765 aa).

The stretch at 198–391 forms a coiled coil; the sequence is QEIENYFQQL…NRRIEFCKER (194 aa). The Protein kinase domain maps to 422–765; that stretch reads SDRLRLKSGG…HSKRAAQASS (344 aa). ATP contacts are provided by residues 428-436 and K449; that span reads KSGGNWTNV. A U-box domain is found at 688 to 762; it reads DIPSVFMCPI…QDWHSKRAAQ (75 aa).

It belongs to the protein kinase superfamily. Ser/Thr protein kinase family.

It catalyses the reaction S-ubiquitinyl-[E2 ubiquitin-conjugating enzyme]-L-cysteine + [acceptor protein]-L-lysine = [E2 ubiquitin-conjugating enzyme]-L-cysteine + N(6)-ubiquitinyl-[acceptor protein]-L-lysine.. It participates in protein modification; protein ubiquitination. In terms of biological role, functions as an E3 ubiquitin ligase. This is Putative U-box domain-containing protein 50 (PUB50) from Arabidopsis thaliana (Mouse-ear cress).